The chain runs to 471 residues: Putative multidrug resistance protein MdtD (471 aa).

The Periplasmic portion of the chain corresponds to 1–11 (MTDLPDSTRWQ). The helical transmembrane segment at 12–32 (LWIVAFGFFMQSLDTTIVNTA) threads the bilayer. Residues 33–48 (LPSMAQSLGESPLHMH) are Cytoplasmic-facing. A helical transmembrane segment spans residues 49-69 (MVIVSYVLTVAVMLPASGWLA). Residues 70 to 76 (DKVGVRN) are Periplasmic-facing. The chain crosses the membrane as a helical span at residues 77–97 (IFFTAIVLFTLGSLFCALSGT). Residues 98-101 (LNEL) lie on the Cytoplasmic side of the membrane. A helical transmembrane segment spans residues 102–124 (LLARALQGVGGAMMVPVGRLTVM). Residues 125-137 (KIVPREQYMAAMT) lie on the Periplasmic side of the membrane. The chain crosses the membrane as a helical span at residues 138 to 158 (FVTLPGQVGPLLGPALGGLLV). The Cytoplasmic portion of the chain corresponds to 159 to 164 (EYASWH). A helical membrane pass occupies residues 165–185 (WIFLINIPVGIIGAIATLMLM). At 186-196 (PNYTMQTRRFD) the chain is on the periplasmic side. A helical membrane pass occupies residues 197 to 217 (LSGFLLLAVGMAVLTLALDGS). Residues 218-224 (KGTGLSP) lie on the Cytoplasmic side of the membrane. A helical transmembrane segment spans residues 225-245 (LAIAGLVAVGVVALVLYLLHA). Over 246-262 (RNNNRALFSLKLFRTRT) the chain is Periplasmic. The helical transmembrane segment at 263–283 (FSLGLAGSFAGRIGSGMLPFM) threads the bilayer. Topologically, residues 284–285 (TP) are cytoplasmic. Residues 286–306 (VFLQIGLGFSPFHAGLMMIPM) form a helical membrane-spanning segment. The Periplasmic segment spans residues 307–341 (VLGSMGMKRIVVQVVNRFGYRRVLVATTLGLSLVT). Residues 342–362 (LLFMTTALLGWYYVLPFVLFL) form a helical membrane-spanning segment. Residues 363-395 (QGMVNSTRFSSMNTLTLKDLPDNLASSGNSLLS) lie on the Cytoplasmic side of the membrane. The chain crosses the membrane as a helical span at residues 396–416 (MIMQLSMSIGVTIAGLLLGLF). The Periplasmic portion of the chain corresponds to 417–430 (GSQHVSIDSGTTQT). The helical transmembrane segment at 431-451 (VFMYTWLSMALIIALPAFIFA) threads the bilayer. At 452–471 (RVPNDTHQNVAISRRKRSAQ) the chain is on the cytoplasmic side.

It belongs to the major facilitator superfamily. TCR/Tet family.

Its subcellular location is the cell inner membrane. In Escherichia coli (strain 55989 / EAEC), this protein is Putative multidrug resistance protein MdtD.